We begin with the raw amino-acid sequence, 323 residues long: Leucine-rich repeat-containing protein 46 (323 aa).

LRR repeat units follow at residues 49–70 (ELET…EKLR), 71–92 (NIHS…ACIT), 93–114 (SLRF…LDLQ), and 115–135 (YLQF…DELP). The 43-residue stretch at 146–188 (NPCTNQEGYRKMVIGALPLLLDLDKQPILERWTSDEEDKSSDD) folds into the LRRCT domain. At threonine 178 the chain carries Phosphothreonine. Phosphoserine is present on residues serine 179, serine 185, and serine 186. The stretch at 203 to 228 (RGFFKDLEQELHQHQERRQQAALTEH) forms a coiled coil. Residues 249 to 323 (MAGDCSSTAT…TKMTNKKSTK (75 aa)) form a disordered region. Residues 267 to 316 (PKATSSTQTASTTKKQVSKNQKSSVQARKGALAATTSKTSQAATPSMTKM) are compositionally biased toward low complexity. Serine 303 bears the Phosphoserine mark.

In terms of tissue distribution, testis-specific (at protein level).

Its subcellular location is the cell projection. The protein localises to the cilium. The protein resides in the flagellum. Required for normal spermatogenesis and male fertility. Plays an important role in sperm flagellum biogenesis. This chain is Leucine-rich repeat-containing protein 46 (Lrrc46), found in Mus musculus (Mouse).